The following is a 429-amino-acid chain: Inositol-3-phosphate synthase 1 (429 aa).

Residues 12–32 (LGVLVVGVGGAVATTMIVGTL) traverse the membrane as a helical segment. NAD(+) is bound by residues Ala-22, Val-23, Asp-79, Ala-116, Ala-165, Thr-167, Tyr-201, Ser-244, Arg-276, Asp-277, and Lys-290.

This sequence belongs to the myo-inositol 1-phosphate synthase family. Homotetramer. NAD(+) serves as cofactor.

The protein localises to the membrane. The enzyme catalyses D-glucose 6-phosphate = 1D-myo-inositol 3-phosphate. It functions in the pathway polyol metabolism; myo-inositol biosynthesis; myo-inositol from D-glucose 6-phosphate: step 1/2. In terms of biological role, key enzyme in myo-inositol biosynthesis pathway that catalyzes the conversion of glucose 6-phosphate to 1D-myo-inositol 3-phosphate in a NAD-dependent manner. The polypeptide is Inositol-3-phosphate synthase 1 (Bacteroides thetaiotaomicron (strain ATCC 29148 / DSM 2079 / JCM 5827 / CCUG 10774 / NCTC 10582 / VPI-5482 / E50)).